We begin with the raw amino-acid sequence, 452 residues long: Kremen protein 1 (452 aa).

An N-terminal signal peptide occupies residues 1-22 (MVMDIWTISLRILLFPSALVLC). Topologically, residues 23–369 (SDSFHSECYT…TTSPSRPSGH (347 aa)) are extracellular. One can recognise a Kringle domain in the interval 29-112 (ECYTVNGADY…YWKYCDIPAC (84 aa)). 8 disulfide bridges follow: cysteine 30–cysteine 112, cysteine 53–cysteine 93, cysteine 82–cysteine 107, cysteine 120–cysteine 184, cysteine 145–cysteine 165, cysteine 149–cysteine 167, cysteine 188–cysteine 196, and cysteine 212–cysteine 238. 2 N-linked (GlcNAc...) asparagine glycosylation sites follow: asparagine 43 and asparagine 57. Positions 114 to 208 (MPGNLGCFRD…DGRIILFDSL (95 aa)) constitute a WSC domain. Residues 212–319 (CGGNYSTDSA…QGFSVVYEAF (108 aa)) form the CUB domain. 5 N-linked (GlcNAc...) asparagine glycosylation sites follow: asparagine 215, asparagine 253, asparagine 291, asparagine 328, and asparagine 344. A helical membrane pass occupies residues 370–390 (VPGWTIYALTGLLILTIIAIS). Topologically, residues 391–452 (AKALLHISMK…HDDRNPLVGE (62 aa)) are cytoplasmic.

As to quaternary structure, interacts with lrp6.

It localises to the cell membrane. In terms of biological role, receptor for Dickkopf proteins. Cooperates with DKK1/2 proteins to inhibit Wnt/beta-catenin signaling by promoting the endocytosis of Wnt receptors LRP5 and LRP6. In the absence of DKK1, potentiates Wnt-beta-catenin signaling by maintaining LRP5 or LRP6 at the cell membrane. This Xenopus laevis (African clawed frog) protein is Kremen protein 1 (kremen1).